We begin with the raw amino-acid sequence, 117 residues long: Huntingtin-interacting protein M (117 aa).

Disordered stretches follow at residues M1–S30 and E71–D117. The span at A72–T81 shows a compositional bias: polar residues. A compositionally biased stretch (basic and acidic residues) spans S82 to D117.

May interact with the N-terminus of HD.

This Homo sapiens (Human) protein is Huntingtin-interacting protein M.